The primary structure comprises 342 residues: NLP effector protein Pc107869 (342 aa).

Positions 1–19 are cleaved as a signal peptide; the sequence is MKTGFFLFAACAALVAVQA. The N-linked (GlcNAc...) asparagine glycan is linked to N24. The tract at residues 41 to 125 is disordered; sequence APRTKAPPTK…PTPDPGPWEA (85 aa). Low complexity predominate over residues 55–75; it reads QQSSLSGSQEQQQEQIETPAP. The segment covering 93–121 has biased composition (pro residues); that stretch reads TPAPTPAPTPAPTPAPTPAPTPAPTPDPG. Residues 226-232 carry the Hepta-peptide GHRHDWE motif motif; the sequence is GHRHDWE.

Belongs to the Necrosis inducing protein (NPP1) family.

It localises to the secreted. Secreted effector that contributes strongly to virulence during infection by P.capsici. Induces cell death in the Solanaceae, including Nicotiana benthamiana. The chain is NLP effector protein Pc107869 from Phytophthora capsici.